Reading from the N-terminus, the 480-residue chain is Aspartyl/glutamyl-tRNA(Asn/Gln) amidotransferase subunit B (480 aa).

This sequence belongs to the GatB/GatE family. GatB subfamily. In terms of assembly, heterotrimer of A, B and C subunits.

The enzyme catalyses L-glutamyl-tRNA(Gln) + L-glutamine + ATP + H2O = L-glutaminyl-tRNA(Gln) + L-glutamate + ADP + phosphate + H(+). It catalyses the reaction L-aspartyl-tRNA(Asn) + L-glutamine + ATP + H2O = L-asparaginyl-tRNA(Asn) + L-glutamate + ADP + phosphate + 2 H(+). Functionally, allows the formation of correctly charged Asn-tRNA(Asn) or Gln-tRNA(Gln) through the transamidation of misacylated Asp-tRNA(Asn) or Glu-tRNA(Gln) in organisms which lack either or both of asparaginyl-tRNA or glutaminyl-tRNA synthetases. The reaction takes place in the presence of glutamine and ATP through an activated phospho-Asp-tRNA(Asn) or phospho-Glu-tRNA(Gln). This is Aspartyl/glutamyl-tRNA(Asn/Gln) amidotransferase subunit B from Streptococcus pneumoniae (strain 70585).